The primary structure comprises 1417 residues: DNA-directed RNA polymerase subunit beta' (1417 aa).

Zn(2+) contacts are provided by Cys68, Cys70, Cys83, and Cys86. Asp458, Asp460, and Asp462 together coordinate Mg(2+). Cys811, Cys884, Cys891, and Cys894 together coordinate Zn(2+).

This sequence belongs to the RNA polymerase beta' chain family. The RNAP catalytic core consists of 2 alpha, 1 beta, 1 beta' and 1 omega subunit. When a sigma factor is associated with the core the holoenzyme is formed, which can initiate transcription. Mg(2+) serves as cofactor. It depends on Zn(2+) as a cofactor.

It catalyses the reaction RNA(n) + a ribonucleoside 5'-triphosphate = RNA(n+1) + diphosphate. DNA-dependent RNA polymerase catalyzes the transcription of DNA into RNA using the four ribonucleoside triphosphates as substrates. In Francisella tularensis subsp. tularensis (strain FSC 198), this protein is DNA-directed RNA polymerase subunit beta'.